The primary structure comprises 202 residues: Cytochrome c oxidase assembly protein CtaG (202 aa).

At 1-13 (MSDKAAAPKKQGR) the chain is on the cytoplasmic side. A helical; Signal-anchor for type II membrane protein membrane pass occupies residues 14–36 (NNGAVVLMCLSFVFGMGAMSYAA). Topologically, residues 37-202 (VPLYRIFCQV…GGAEKVEKKL (166 aa)) are periplasmic. The disordered stretch occupies residues 183–202 (EGPKPLASNEGGAEKVEKKL).

The protein belongs to the COX11/CtaG family.

Its subcellular location is the cell inner membrane. Functionally, exerts its effect at some terminal stage of cytochrome c oxidase synthesis, probably by being involved in the insertion of the copper B into subunit I. The protein is Cytochrome c oxidase assembly protein CtaG of Rhizobium etli (strain CIAT 652).